Reading from the N-terminus, the 130-residue chain is DNA-directed RNA polymerase subunit omega (130 aa).

2 disordered regions span residues 79 to 98 and 108 to 130; these read EPESDTVPLIGSAGASVDAD and TEEELLKGLEGLAPPEEQPEEDE.

This sequence belongs to the RNA polymerase subunit omega family. In terms of assembly, the RNAP catalytic core consists of 2 alpha, 1 beta, 1 beta' and 1 omega subunit. When a sigma factor is associated with the core the holoenzyme is formed, which can initiate transcription.

It carries out the reaction RNA(n) + a ribonucleoside 5'-triphosphate = RNA(n+1) + diphosphate. Its function is as follows. Promotes RNA polymerase assembly. Latches the N- and C-terminal regions of the beta' subunit thereby facilitating its interaction with the beta and alpha subunits. This Nitrobacter winogradskyi (strain ATCC 25391 / DSM 10237 / CIP 104748 / NCIMB 11846 / Nb-255) protein is DNA-directed RNA polymerase subunit omega.